We begin with the raw amino-acid sequence, 237 residues long: 1-(5-phosphoribosyl)-5-[(5-phosphoribosylamino)methylideneamino] imidazole-4-carboxamide isomerase (237 aa).

Residue Asp-8 is the Proton acceptor of the active site. Asp-130 acts as the Proton donor in catalysis.

It belongs to the HisA/HisF family.

Its subcellular location is the cytoplasm. It catalyses the reaction 1-(5-phospho-beta-D-ribosyl)-5-[(5-phospho-beta-D-ribosylamino)methylideneamino]imidazole-4-carboxamide = 5-[(5-phospho-1-deoxy-D-ribulos-1-ylimino)methylamino]-1-(5-phospho-beta-D-ribosyl)imidazole-4-carboxamide. It functions in the pathway amino-acid biosynthesis; L-histidine biosynthesis; L-histidine from 5-phospho-alpha-D-ribose 1-diphosphate: step 4/9. The polypeptide is 1-(5-phosphoribosyl)-5-[(5-phosphoribosylamino)methylideneamino] imidazole-4-carboxamide isomerase (Caldicellulosiruptor bescii (strain ATCC BAA-1888 / DSM 6725 / KCTC 15123 / Z-1320) (Anaerocellum thermophilum)).